Reading from the N-terminus, the 248-residue chain is UPF0246 protein FN1762 (248 aa).

The protein belongs to the UPF0246 family.

This chain is UPF0246 protein FN1762, found in Fusobacterium nucleatum subsp. nucleatum (strain ATCC 25586 / DSM 15643 / BCRC 10681 / CIP 101130 / JCM 8532 / KCTC 2640 / LMG 13131 / VPI 4355).